The primary structure comprises 465 residues: Monocarboxylate transporter 4 (465 aa).

Topologically, residues 2–17 (GGAVVDEGPTGVKAPD) are cytoplasmic. The chain crosses the membrane as a helical span at residues 18–38 (GGWGWAVLFGCFVITGFSYAF). Residues 39–61 (PKAVSVFFKELIQEFGIGYSDTA) lie on the Extracellular side of the membrane. The chain crosses the membrane as a helical span at residues 62 to 82 (WISSILLAMLYGTGPLCSVCV). Residues 83–84 (NR) are Cytoplasmic-facing. A helical transmembrane segment spans residues 85–105 (FGCRPVMLVGGLFASLGMVAA). The Extracellular portion of the chain corresponds to 106–109 (SFCR). Residues 110–130 (SIIQVYLTTGVITGLGLALNF) form a helical membrane-spanning segment. The Cytoplasmic segment spans residues 131-149 (QPSLIMLNRYFSKRRPMAN). The helical transmembrane segment at 150-170 (GLAAAGSPVFLCALSPLGQLL) threads the bilayer. Topologically, residues 171–179 (QDRYGWRGG) are extracellular. The helical transmembrane segment at 180 to 200 (FLILGGLLLNCCVCAALMRPL) threads the bilayer. Residues 201-227 (VVTAQPGSGPPRPSRRLLDLSVFRDRG) are Cytoplasmic-facing. A helical transmembrane segment spans residues 228-248 (FVLYAVAASVMVLGLFVPPVF). Topologically, residues 249–264 (VVSYAKDLGVPDTKAA) are extracellular. A helical transmembrane segment spans residues 265 to 285 (FLLTILGFIDIFARPAAGFVA). At 286–294 (GLGKVRPYS) the chain is on the cytoplasmic side. The helical transmembrane segment at 295–315 (VYLFSFSMFFNGLADLAGSTA) threads the bilayer. The Extracellular portion of the chain corresponds to 316–317 (GD). The helical transmembrane segment at 318 to 338 (YGGLVVFCIFFGISYGMVGAL) threads the bilayer. At 339–351 (QFEVLMAIVGTHK) the chain is on the cytoplasmic side. Residues 352-372 (FSSAIGLVLLMEAVAVLVGPP) traverse the membrane as a helical segment. Over 373–384 (SGGKLLDATHVY) the chain is Extracellular. The helical transmembrane segment at 385-405 (MYVFILAGAEVLTSSLILLLG) threads the bilayer. Residues 406 to 465 (NFFCIRKKPKEPQPEVAAAEEEKLHKPPADSGVDLREVEHFLKAEPEKNGEVVHTPETSV) lie on the Cytoplasmic side of the membrane. The interval 419 to 438 (PEVAAAEEEKLHKPPADSGV) is disordered. Basolateral sorting signal stretches follow at residues 423-441 (AAEE…VDLR) and 441-465 (REVE…ETSV). Basic and acidic residues predominate over residues 425–438 (EEEKLHKPPADSGV). Ser436 is subject to Phosphoserine. Thr460 is modified (phosphothreonine). Ser464 is modified (phosphoserine).

This sequence belongs to the major facilitator superfamily. Monocarboxylate porter (TC 2.A.1.13) family. In terms of assembly, interacts with BSG; interaction mediates SLC16A3 targeting to the plasma membrane. As to expression, highly expressed in skeletal muscle.

The protein localises to the cell membrane. It localises to the basolateral cell membrane. It carries out the reaction (S)-lactate(in) + H(+)(in) = (S)-lactate(out) + H(+)(out). It catalyses the reaction pyruvate(out) + H(+)(out) = pyruvate(in) + H(+)(in). Its function is as follows. Proton-dependent transporter of monocarboxylates such as L-lactate and pyruvate. Plays a predominant role in L-lactate efflux from highly glycolytic cells. The sequence is that of Monocarboxylate transporter 4 (SLC16A3) from Homo sapiens (Human).